A 110-amino-acid polypeptide reads, in one-letter code: uncharacterized protein (110 aa).

This is an uncharacterized protein from Mycobacterium tuberculosis (strain CDC 1551 / Oshkosh).